A 473-amino-acid polypeptide reads, in one-letter code: Aspartyl/glutamyl-tRNA(Asn/Gln) amidotransferase subunit B (473 aa).

The protein belongs to the GatB/GatE family. GatB subfamily. Heterotrimer of A, B and C subunits.

It carries out the reaction L-glutamyl-tRNA(Gln) + L-glutamine + ATP + H2O = L-glutaminyl-tRNA(Gln) + L-glutamate + ADP + phosphate + H(+). It catalyses the reaction L-aspartyl-tRNA(Asn) + L-glutamine + ATP + H2O = L-asparaginyl-tRNA(Asn) + L-glutamate + ADP + phosphate + 2 H(+). In terms of biological role, allows the formation of correctly charged Asn-tRNA(Asn) or Gln-tRNA(Gln) through the transamidation of misacylated Asp-tRNA(Asn) or Glu-tRNA(Gln) in organisms which lack either or both of asparaginyl-tRNA or glutaminyl-tRNA synthetases. The reaction takes place in the presence of glutamine and ATP through an activated phospho-Asp-tRNA(Asn) or phospho-Glu-tRNA(Gln). The polypeptide is Aspartyl/glutamyl-tRNA(Asn/Gln) amidotransferase subunit B (Francisella tularensis subsp. novicida (strain U112)).